Consider the following 104-residue polypeptide: MAKFDPRNLPDLVRRPILTEKATIMMEQNKYTFEVTPKASKPQIRAAIEDLFQVKVVKVNTALPPRRKKRVGKFIGFKPQYKKAIVTIAPGDVDKIRQVLFPEV.

This sequence belongs to the universal ribosomal protein uL23 family. As to quaternary structure, part of the 50S ribosomal subunit. Contacts protein L29, and trigger factor when it is bound to the ribosome.

In terms of biological role, one of the early assembly proteins it binds 23S rRNA. One of the proteins that surrounds the polypeptide exit tunnel on the outside of the ribosome. Forms the main docking site for trigger factor binding to the ribosome. The polypeptide is Large ribosomal subunit protein uL23 (Nostoc sp. (strain PCC 7120 / SAG 25.82 / UTEX 2576)).